A 1391-amino-acid polypeptide reads, in one-letter code: DNA-directed RNA polymerase subunit beta' (1391 aa).

Residues Cys70, Cys72, Cys85, and Cys88 each contribute to the Zn(2+) site. The Mg(2+) site is built by Asp461, Asp463, and Asp465. Zn(2+)-binding residues include Cys809, Cys882, Cys889, and Cys892.

The protein belongs to the RNA polymerase beta' chain family. As to quaternary structure, the RNAP catalytic core consists of 2 alpha, 1 beta, 1 beta' and 1 omega subunit. When a sigma factor is associated with the core the holoenzyme is formed, which can initiate transcription. The cofactor is Mg(2+). Zn(2+) is required as a cofactor.

It catalyses the reaction RNA(n) + a ribonucleoside 5'-triphosphate = RNA(n+1) + diphosphate. DNA-dependent RNA polymerase catalyzes the transcription of DNA into RNA using the four ribonucleoside triphosphates as substrates. This Zymomonas mobilis subsp. mobilis (strain ATCC 31821 / ZM4 / CP4) protein is DNA-directed RNA polymerase subunit beta'.